Reading from the N-terminus, the 332-residue chain is Glycerol-3-phosphate dehydrogenase [NAD(P)+] (332 aa).

Ser11, Trp12, Arg32, Arg33, and Lys106 together coordinate NADPH. Positions 106 and 136 each coordinate sn-glycerol 3-phosphate. Ala140 is a binding site for NADPH. Positions 191, 244, 254, 255, and 256 each coordinate sn-glycerol 3-phosphate. Lys191 serves as the catalytic Proton acceptor. Arg255 provides a ligand contact to NADPH. NADPH-binding residues include Val280 and Glu282.

Belongs to the NAD-dependent glycerol-3-phosphate dehydrogenase family.

Its subcellular location is the cytoplasm. The catalysed reaction is sn-glycerol 3-phosphate + NAD(+) = dihydroxyacetone phosphate + NADH + H(+). The enzyme catalyses sn-glycerol 3-phosphate + NADP(+) = dihydroxyacetone phosphate + NADPH + H(+). It participates in membrane lipid metabolism; glycerophospholipid metabolism. Functionally, catalyzes the reduction of the glycolytic intermediate dihydroxyacetone phosphate (DHAP) to sn-glycerol 3-phosphate (G3P), the key precursor for phospholipid synthesis. This is Glycerol-3-phosphate dehydrogenase [NAD(P)+] from Corynebacterium urealyticum (strain ATCC 43042 / DSM 7109).